The chain runs to 338 residues: Ferrochelatase (338 aa).

Residues H189 and E294 each contribute to the Fe cation site.

This sequence belongs to the ferrochelatase family.

It localises to the cytoplasm. The enzyme catalyses heme b + 2 H(+) = protoporphyrin IX + Fe(2+). The protein operates within porphyrin-containing compound metabolism; protoheme biosynthesis; protoheme from protoporphyrin-IX: step 1/1. Functionally, catalyzes the ferrous insertion into protoporphyrin IX. This chain is Ferrochelatase, found in Pseudomonas putida (strain ATCC 47054 / DSM 6125 / CFBP 8728 / NCIMB 11950 / KT2440).